The following is a 465-amino-acid chain: Nucleolar and spindle-associated protein 1 (465 aa).

Residues 32 to 61 (ADKLLRALKAHLKNEARKENENQDEIQTSA) are a coiled coil. Disordered stretches follow at residues 44–123 (KNEA…QNHS), 148–207 (VEVP…TPNF), and 252–294 (GVPA…GSAK). The span at 56–75 (EIQTSASSCDEPEIQTSSQE) shows a compositional bias: polar residues. A compositionally biased stretch (basic and acidic residues) spans 76 to 86 (QAEREPDDHVT). Basic residues predominate over residues 87–96 (KTRGRRKTVH). Ser-152 is modified (phosphoserine). A compositionally biased stretch (polar residues) spans 154 to 166 (PNESQGDENTVSS). The span at 169-179 (HGIDGNEDPRV) shows a compositional bias: basic and acidic residues. Thr-204 bears the Phosphothreonine mark. The segment at 262–405 (GRLSVACTPG…HKGKLKPWGQ (144 aa)) is interaction with microtubules. Ser-265 is subject to Phosphoserine. Thr-269 carries the post-translational modification Phosphothreonine. Phosphoserine occurs at positions 272, 292, 299, and 334. The interval 308-338 (SAATKDNEHKRSLTKTPARKSPHVTTSVNTP) is disordered. A phosphothreonine mark is found at Thr-337, Thr-361, and Thr-372. 2 positions are modified to phosphoserine: Ser-375 and Ser-386. Positions 396–454 (HKGKLKPWGQSKENNSLHEHVNRVSFHKKTYKQPRLQTREEQRKKHERERKEKKEKVLG) are disordered. Positions 407–413 (KENNSLH) match the KEN box motif. A coiled-coil region spans residues 430-457 (RLQTREEQRKKHERERKEKKEKVLGVRR). A compositionally biased stretch (basic and acidic residues) spans 432–453 (QTREEQRKKHERERKEKKEKVL).

It belongs to the NUSAP family. In terms of assembly, interacts with DNA and microtubules. Microtubule bundling is inhibited by IPO7, KPNA2 and KPNB1 while association with DNA is also inhibited by IPO7 and KPNA2. In terms of processing, ubiquitinated. Ubiquitination by FZR1 may lead to proteasome-dependent degradation of this protein.

It localises to the cytoplasm. It is found in the nucleus. The protein localises to the nucleolus. The protein resides in the cytoskeleton. Its subcellular location is the spindle. It localises to the chromosome. In terms of biological role, microtubule-associated protein with the capacity to bundle and stabilize microtubules. May associate with chromosomes and promote the organization of mitotic spindle microtubules around them. This Bos taurus (Bovine) protein is Nucleolar and spindle-associated protein 1 (NUSAP1).